A 117-amino-acid chain; its full sequence is Large ribosomal subunit protein bL20c (117 aa).

The protein belongs to the bacterial ribosomal protein bL20 family.

It is found in the plastid. It localises to the chloroplast. In terms of biological role, binds directly to 23S ribosomal RNA and is necessary for the in vitro assembly process of the 50S ribosomal subunit. It is not involved in the protein synthesizing functions of that subunit. This is Large ribosomal subunit protein bL20c from Buxus microphylla (Littleleaf boxwood).